The sequence spans 298 residues: Probable 2-(5''-triphosphoribosyl)-3'-dephosphocoenzyme-A synthase 2 (298 aa).

Belongs to the CitG/MdcB family.

The enzyme catalyses 3'-dephospho-CoA + ATP = 2'-(5''-triphospho-alpha-D-ribosyl)-3'-dephospho-CoA + adenine. This Salmonella paratyphi A (strain ATCC 9150 / SARB42) protein is Probable 2-(5''-triphosphoribosyl)-3'-dephosphocoenzyme-A synthase 2.